The primary structure comprises 133 residues: MPEETLLAFDFGEKKIGIAIGNTLTRQARPLEIIFSETRAARFGRIGQLLQEWQPQRAVVGLPLTLDGQEQPASARARRFANQLHGHFGLAVELVDERSSSMEAQQLLGTHADDDAVAAAVILQRYLDTLSQP.

This sequence belongs to the YqgF nuclease family.

The protein resides in the cytoplasm. Could be a nuclease involved in processing of the 5'-end of pre-16S rRNA. This Bordetella pertussis (strain Tohama I / ATCC BAA-589 / NCTC 13251) protein is Putative pre-16S rRNA nuclease.